A 251-amino-acid chain; its full sequence is MNSSYHRRVPVVGELGSATSSQLPSTSPSIVIPLGSTEQHGPHLPLDTDTRIATAVARTVTARLHAEDLPIAQEEWLMAPAIAYGASGEHQRFAGTISIGTEALTMLLVEYGRSAACWARRLVFVNGHGGNVGALTRAVGLLRAEGRDAGWCPCTCPGGDPHAGHTETSVLLHLSPADVRTERWRAGNRAPLPVLLPSMRRGGVAAVSETGVLGDPTTATAAEGRRIFAAMVDDCVRRVARWMPQPDGMLT.

Positions 38, 40, 49, 128, and 167 each coordinate a divalent metal cation.

This sequence belongs to the creatininase superfamily. In terms of assembly, homooctamer. The cofactor is Fe(2+). Zn(2+) is required as a cofactor.

The catalysed reaction is [mycofactocin precursor peptide]-C-terminal glycyl-N-{5-[(4-hydroxyphenyl)methyl]-4,4-dimethyl-2-oxopyrrolidin-3-yl}acetamide + H2O = [mycofactocin precursor peptide]-C-terminal glycine + 3-amino-5-[(4-hydroxyphenyl)methyl]-4,4-dimethyl-2-pyrrolidin-2-one. Peptidase involved in the biosynthesis of the enzyme cofactor mycofactocin (MFT). Catalyzes cleavage of the MftC-modified MftA peptide to liberate its final two residues, which consist of a cross-linked valine-decarboxylated tyrosine dipeptide (named 3-amino-5-[(4-hydroxyphenyl)methyl]-4,4-dimethyl-2-pyrrolidin-2-one or ADHP). The chain is Mycofactocin precursor peptide peptidase (mftE) from Mycobacterium tuberculosis (strain CDC 1551 / Oshkosh).